Consider the following 1358-residue polypeptide: Xanthine dehydrogenase/oxidase (1358 aa).

The 2Fe-2S ferredoxin-type domain occupies 8–95; the sequence is DELVFFVNGK…HVAVTTVEGI (88 aa). Residues C47, C52, C55, C77, C117, C120, C152, and C154 each coordinate [2Fe-2S] cluster. The FAD-binding PCMH-type domain occupies 255–440; it reads FKGERVMWIQ…LSVEIPYSKE (186 aa). FAD-binding positions include 283-290, F363, 373-377, D386, L430, and K448; these read LVVGNTEV and ALGGN. Mo-molybdopterin contacts are provided by Q796 and F827. The substrate site is built by E831 and R909. R941 provides a ligand contact to Mo-molybdopterin. 2 residues coordinate substrate: F943 and T1039. Residue A1108 participates in Mo-molybdopterin binding. Residue E1290 is the Proton acceptor of the active site.

The protein belongs to the xanthine dehydrogenase family. In terms of assembly, homodimer. The cofactor is FAD. Mo-molybdopterin is required as a cofactor. [2Fe-2S] cluster serves as cofactor. Detected in liver (at protein level).

Its subcellular location is the peroxisome. It localises to the cytoplasm. The enzyme catalyses xanthine + NAD(+) + H2O = urate + NADH + H(+). The catalysed reaction is hypoxanthine + NAD(+) + H2O = xanthine + NADH + H(+). It catalyses the reaction xanthine + O2 + H2O = urate + H2O2. Its function is as follows. Key enzyme in purine degradation. Catalyzes the oxidation of hypoxanthine to xanthine. Catalyzes the oxidation of xanthine to uric acid. Contributes to the generation of reactive oxygen species. The sequence is that of Xanthine dehydrogenase/oxidase (XDH) from Gallus gallus (Chicken).